We begin with the raw amino-acid sequence, 578 residues long: MPSLIPKEFINELIFKTNIIDIINTRLPLKKVGKNYNTHCPFHQEKTPSFTVNFEKQFYFCFGCNTHGNIIDFLMNYEQLTFVESIKELAKIHGLTIPCKNINKEKLFNYEKITNLYLLTKNIADLYHRNIFKTEYAYQYILNRGIDKSMIKYFNLGFSPKNWYDLEKKNKKQCYNQKELQEIGILKTTILGYTYDRFKNRIIFPIRNKNGNIVGFGGRTLNNHIPKYINSPETQIFHKGFQLYGLYEMLKTNPKPKQILIVEGYVDVIALVQFKINYTISTLGTIISNEQIKLLFRTSNTIIFCYDGDVSGQKAAWRTLNISLSHIHDGKNVKFIFLPNNEDPDSIIRKEGHDNFKIRIKKSIDFSKFLLQTLFKKTDLNSISEKSHTSTIAISLIRKIPGKITQTYLFQTLSKKIGILDYHVLINNNINNINTKIYTKKPIKKTTIRIVIALLIQNPWLALTLPSLKHLQNYKIIGLSCFLDLVEKCISMPNSNTGQILEKYRNKNIFKHLANLAKWDHMIHNEKIKDFFLDSLTKICDIILEDRQNKLISQERLNGLNKQEKYELWSINKELAKK.

The CHC2-type zinc finger occupies 40-64; it reads CPFHQEKTPSFTVNFEKQFYFCFGC. One can recognise a Toprim domain in the interval 257 to 339; it reads KQILIVEGYV…GKNVKFIFLP (83 aa). Positions 263, 307, and 309 each coordinate Mg(2+).

The protein belongs to the DnaG primase family. In terms of assembly, monomer. Interacts with DnaB. The cofactor is Zn(2+). It depends on Mg(2+) as a cofactor.

The enzyme catalyses ssDNA + n NTP = ssDNA/pppN(pN)n-1 hybrid + (n-1) diphosphate.. In terms of biological role, RNA polymerase that catalyzes the synthesis of short RNA molecules used as primers for DNA polymerase during DNA replication. This Buchnera aphidicola subsp. Baizongia pistaciae (strain Bp) protein is DNA primase.